We begin with the raw amino-acid sequence, 274 residues long: Putative hydro-lyase Veis_4744 (274 aa).

This sequence belongs to the D-glutamate cyclase family.

The chain is Putative hydro-lyase Veis_4744 from Verminephrobacter eiseniae (strain EF01-2).